A 652-amino-acid polypeptide reads, in one-letter code: DNA ligase (652 aa).

Residues 29–33, 78–79, and glutamate 107 each bind NAD(+); these read DSDYD and SL. Lysine 109 functions as the N6-AMP-lysine intermediate in the catalytic mechanism. Residues arginine 130, glutamate 164, lysine 278, and lysine 302 each coordinate NAD(+). Positions 395, 398, 413, and 418 each coordinate Zn(2+). Residues 577-652 form the BRCT domain; the sequence is NSDAALFGLT…IEDEDWLRKL (76 aa).

Belongs to the NAD-dependent DNA ligase family. LigA subfamily. Requires Mg(2+) as cofactor. Mn(2+) is required as a cofactor.

It carries out the reaction NAD(+) + (deoxyribonucleotide)n-3'-hydroxyl + 5'-phospho-(deoxyribonucleotide)m = (deoxyribonucleotide)n+m + AMP + beta-nicotinamide D-nucleotide.. DNA ligase that catalyzes the formation of phosphodiester linkages between 5'-phosphoryl and 3'-hydroxyl groups in double-stranded DNA using NAD as a coenzyme and as the energy source for the reaction. It is essential for DNA replication and repair of damaged DNA. The chain is DNA ligase from Streptococcus pyogenes serotype M18 (strain MGAS8232).